The following is a 522-amino-acid chain: TNF receptor-associated factor 6 (522 aa).

Positions 1-354 (MSLLNCENSC…EAQQCNGIYI (354 aa)) are interaction with TAX1BP1. The RING-type zinc-finger motif lies at 70–109 (CPICLMALREAVQTPCGHRFCKACIIKSIRDAGHKCPVDN). A Glycyl lysine isopeptide (Lys-Gly) (interchain with G-Cter in SUMO); alternate cross-link involves residue K124. K124 participates in a covalent cross-link: Glycyl lysine isopeptide (Lys-Gly) (interchain with G-Cter in ubiquitin); alternate. K142 participates in a covalent cross-link: Glycyl lysine isopeptide (Lys-Gly) (interchain with G-Cter in SUMO). TRAF-type zinc fingers lie at residues 150-202 (DHQA…EDKE) and 203-259 (IHDQ…NHLA). The stretch at 288 to 348 (YISEVRNFQE…DKVAEIEAQQ (61 aa)) forms a coiled coil. Residue K319 forms a Glycyl lysine isopeptide (Lys-Gly) (interchain with G-Cter in ubiquitin) linkage. Residues 350 to 499 (NGIYIWKIGN…DDTLLVRCEV (150 aa)) form the MATH domain. The segment at 355-522 (WKIGNFGMHL…FQPRSTDAGV (168 aa)) is interaction with TANK. K453 participates in a covalent cross-link: Glycyl lysine isopeptide (Lys-Gly) (interchain with G-Cter in SUMO).

The protein belongs to the TNF receptor-associated factor family. A subfamily. As to quaternary structure, homotrimer. Homooligomer. N-terminal region is dimeric while C-terminal region is trimeric; maybe providing a mode of oligomerization. Upon IL1B treatment, forms a complex with PELI1, IRAK1, IRAK4 and MYD88; this complex recruits MAP3K7/TAK1, TAB1 and TAB2 to mediate NF-kappa-B activation. Direct binding of SMAD6 to PELI1 prevents the complex formation and hence negatively regulates IL1R-TLR signaling and eventually NF-kappa-B-mediated gene expression. Binds to TNFRSF5/CD40 and TNFRSF11A/RANK. Associates with NGFR, TNFRSF17, IRAK2, IRAK3, RIPK2, MAP3K1, MAP3K5, MAP3K14, CSK, TRAF, TRAF-interacting protein TRIP and TNF receptor associated protein TDP2. Interacts with IL17R. Interacts with SQSTM1 bridging NTRK1 and NGFR. Forms a ternary complex with SQSTM1 and PRKCZ. Interacts with PELI2 and PELI3. Binds UBE2V1. Interacts with TAX1BP1; this interaction mediates deubiquitination of TRAF6 and inhibition of NF-kappa-B activation. Interacts with ZNF675. Interacts with ARRB1 and ARRB2. Interacts with MAP3K7 and TAB1/MAP3K7IP1; during IL-1 signaling. Interacts with UBE2N. Interacts with TGFBR1, HDAC1 and RANGAP1. Interacts with AKT1, AKT2 and AKT3. Interacts (via TRAF domains) with NUMBL (via C-terminal). Interacts with RBCK1. Interacts with LIMD1 (via LIM domains). Interacts with RSAD2/viperin. Interacts (via C-terminus) with EIF2AK2/PKR (via the kinase catalytic domain). Interacts with ZFAND5. Interacts with IL1RL1. Interacts with TRAFD1. Interacts with AJUBA. Interacts with MAVS/IPS1. Interacts (via TRAF domains) with DYNC2I2 (via WD domains). Interacts with IFIT3 (via N-terminus). Interacts with TICAM2. Interacts with CARD14. Interacts with CD40 and MAP3K8; the interaction is required for ERK activation. Interacts with TICAM1 and this interaction is enhanced in the presence of WDFY1. Interacts with TANK; this interaction increases in response to DNA damage. Interacts with USP10; this interaction increases in response to DNA damage. Interacts with ZC3H12A; this interaction increases in response to DNA damage and is stimulated by TANK. Interacts with WDFY3. Interacts with TRIM13. Interacts with GPS2. Interacts (via C-terminus) with SASH1. Interacts with LRRC19. Interacts with IL17RA and TRAF3IP2. Interacts with TOMM70. Interacts with AMBRA1; interaction is required to mediate 'Lys-63'-linked ubiquitination of ULK1. Interacts with CRBN; this interaction inhibits TLR4-mediated signaling by preventing TRAF6-mediated ubiquitination of ECSIT. In terms of processing, sumoylated on Lys-124, Lys-142 and Lys-453 with SUMO1. Polyubiquitinated on Lys-124 by TRAF3IP2; after cell stimulation with IL17A. Polyubiquitinated on Lys-124; after cell stimulation with IL1B or TGFB. This ligand-induced cell stimulation leads to dimerization/oligomerization of TRAF6 molecules, followed by auto-ubiquitination which involves UBE2N and UBE2V1 and leads to TRAF6 activation. This 'Lys-63' site-specific poly-ubiquitination appears to be associated with the activation of signaling molecules. Endogenous autoubiquitination occurs only for the cytoplasmic form. Deubiquitinated by USP10 in a TANK-dependent manner, leading to the negative regulation of NF-kappaB signaling upon DNA damage. LRRC19 induces 'Lys-63' ubiquitination. Ubiquitinated at Lys-319 by the SCF(FBXL2) complex, leading to its degradation by the proteasome. Post-translationally, (Microbial infection) Deubiquitinated by Epstein-Barr virus BPLF1 on both 'Lys-48' and 'Lys-63'-linked ubiquitin chains; leading to NF-kappa-B signaling inhibition. In terms of tissue distribution, expressed in heart, brain, placenta, lung, liver, skeletal muscle, kidney and pancreas.

It is found in the cytoplasm. Its subcellular location is the cell cortex. The protein resides in the nucleus. The protein localises to the lipid droplet. It carries out the reaction S-ubiquitinyl-[E2 ubiquitin-conjugating enzyme]-L-cysteine + [acceptor protein]-L-lysine = [E2 ubiquitin-conjugating enzyme]-L-cysteine + N(6)-ubiquitinyl-[acceptor protein]-L-lysine.. It functions in the pathway protein modification; protein ubiquitination. Functionally, E3 ubiquitin ligase that, together with UBE2N and UBE2V1, mediates the synthesis of 'Lys-63'-linked-polyubiquitin chains conjugated to proteins, such as ECSIT, IKBKG, IRAK1, AKT1 and AKT2. Also mediates ubiquitination of free/unanchored polyubiquitin chain that leads to MAP3K7 activation. Leads to the activation of NF-kappa-B and JUN. Seems to also play a role in dendritic cells (DCs) maturation and/or activation. Represses c-Myb-mediated transactivation, in B-lymphocytes. Adapter protein that seems to play a role in signal transduction initiated via TNF receptor, IL-1 receptor and IL-17 receptor. Regulates osteoclast differentiation by mediating the activation of adapter protein complex 1 (AP-1) and NF-kappa-B, in response to RANK-L stimulation. Together with MAP3K8, mediates CD40 signals that activate ERK in B-cells and macrophages, and thus may play a role in the regulation of immunoglobulin production. Acts as a regulator of the JNK and NF-kappa-B signaling pathways by initiating assembly of heterotypic 'Lys-63'-/'Lys-48'-linked branched ubiquitin chains that are then recognized by TAB2: TRAF6 catalyzes initial 'Lys-63'-linked-polyubiquitin chains that are then branched via 'Lys-48'-linked polyubiquitin by HUWE1. 'Lys-63'-/'Lys-48'-linked branched ubiquitin chains protect 'Lys-63'-linkages from CYLD deubiquitination. Participates also in the TCR signaling by ubiquitinating LAT. The sequence is that of TNF receptor-associated factor 6 (TRAF6) from Homo sapiens (Human).